Here is an 82-residue protein sequence, read N- to C-terminus: Savignygrin (-) (82 aa).

The N-terminal stretch at 1 to 21 is a signal peptide; that stretch reads MQANIFVFAFLLLSVAVAAYG. Disulfide bonds link Cys26-Cys79, Cys34-Cys59, and Cys53-Cys75. Positions 35 to 37 match the Cell attachment site motif; it reads RGD.

As to expression, expressed in salivary glands.

The protein resides in the cytoplasmic vesicle. Its subcellular location is the secretory vesicle. The protein localises to the secreted. In terms of biological role, tick salivary platelet aggregation inhibitor that plays an important part in the anti-hemostatic strategy of ticks. Inhibits platelet aggregation induced by ADP (IC(50)=130 nM), collagen, the thrombin receptor-activating peptide, and epinephrine, although platelets are activated and their shape changed. Binding to platelets is similar for resting and activated platelets (Kd=50-70 nM). Acts by specifically binding to platelet membrane glycoprotein IIb-IIIa (ITGA2B/ITGB3) in a divalent metal ion dependent manner. In contrast to many disintegrins which only interacts with the beta-3 subunit, this protein interacts with the two subunits (alpha-IIb and beta-3). Also causes disaggregation of aggregated platelets without influencing the activated spherical shape associated with aggregated platelets and causes a decrease in the number of pseudopodia on the activated platelet surface. Does not show any inhibitory activity for the different serine proteases tested. In Ornithodoros kalahariensis (Tick), this protein is Savignygrin (-).